A 637-amino-acid polypeptide reads, in one-letter code: Proton myo-inositol cotransporter (637 aa).

Residues 1–65 are Cytoplasmic-facing; the sequence is MSRKASEDVE…AARRQFQRDE (65 aa). Ser6 carries the post-translational modification Phosphoserine. Residues 16-38 are disordered; the sequence is LSSLMGERRRRQPEPGAPGGERS. Phosphoserine is present on residues Ser44 and Ser47. Residues 66–86 form a helical membrane-spanning segment; that stretch reads TPAFVYAAAAFSALGGFLFGY. Over 87 to 114 the chain is Extracellular; sequence DTGVVSGAMLLLRRQMRLGAMWQELLVS. The chain crosses the membrane as a helical span at residues 115-135; sequence GAVGAAAVAALAGGALNGALG. Topologically, residues 136–137 are cytoplasmic; sequence RR. A helical membrane pass occupies residues 138-158; the sequence is SAILLASALCTVGSAVLAAAA. At 159-167 the chain is on the extracellular side; sequence NKETLLAGR. A helical membrane pass occupies residues 168–188; it reads LVVGLGIGIASMTVPVYIAEV. Topologically, residues 189 to 201 are cytoplasmic; it reads SPPNLRGRLVTIN. The helical transmembrane segment at 202-222 threads the bilayer; that stretch reads TLFITGGQFFASVVDGAFSYL. Residues 223 to 228 lie on the Extracellular side of the membrane; that stretch reads QKDGWR. A helical membrane pass occupies residues 229–249; the sequence is YMLGLAAIPAVIQFLGFLFLP. Residues 250 to 313 are Cytoplasmic-facing; sequence ESPRWLIQKG…RMLSYPPTRR (64 aa). Residues 314–334 form a helical membrane-spanning segment; that stretch reads ALAVGCGLQMFQQLSGINTIM. The Extracellular portion of the chain corresponds to 335–352; the sequence is YYSATILQMSGVEDDRLA. Residues 353 to 373 traverse the membrane as a helical segment; it reads IWLASITAFTNFIFTLVGVWL. The Cytoplasmic segment spans residues 374–382; sequence VEKVGRRKL. Residues 383 to 403 form a helical membrane-spanning segment; that stretch reads TFGSLAGTTVALTILALGFLL. Over 404 to 497 the chain is Extracellular; that stretch reads SAQVSPRVTF…SFCPTPYSWT (94 aa). 3 N-linked (GlcNAc...) asparagine glycosylation sites follow: Asn422, Asn447, and Asn474. Residues 498–518 form a helical membrane-spanning segment; sequence ALVGLVLYLVFFAPGMGPMPW. Residues 519–538 are Cytoplasmic-facing; it reads TVNSEIYPLWARSTGNACSA. The helical transmembrane segment at 539-559 threads the bilayer; it reads GINWIFNVLVSLTFLHTAEYL. Over 560–562 the chain is Extracellular; it reads TYY. A helical membrane pass occupies residues 563–583; the sequence is GAFFLYAGFAAVGLLFVYGCL. The Cytoplasmic segment spans residues 584 to 637; it reads PETKGKKLEEIESLFDHRLCTCGTADSDEGRYIEYIRVKGSNYHLSDNDASDVE. Phosphoserine occurs at positions 629 and 634.

It belongs to the major facilitator superfamily. Sugar transporter (TC 2.A.1.1) family.

It localises to the cell membrane. It catalyses the reaction myo-inositol(out) + H(+)(out) = myo-inositol(in) + H(+)(in). Functionally, h(+)-myo-inositol cotransporter. Can also transport related stereoisomers. This Rattus norvegicus (Rat) protein is Proton myo-inositol cotransporter.